Here is a 160-residue protein sequence, read N- to C-terminus: Cytochrome b6-f complex subunit 4 (160 aa).

A run of 3 helical transmembrane segments spans residues 36–56, 95–115, and 131–151; these read LLYI…GLGV, LLGV…PFIE, and LVFL…TMPI.

The protein belongs to the cytochrome b family. PetD subfamily. In terms of assembly, the 4 large subunits of the cytochrome b6-f complex are cytochrome b6, subunit IV (17 kDa polypeptide, petD), cytochrome f and the Rieske protein, while the 4 small subunits are petG, petL, petM and petN. The complex functions as a dimer.

Its subcellular location is the plastid. The protein localises to the chloroplast thylakoid membrane. Component of the cytochrome b6-f complex, which mediates electron transfer between photosystem II (PSII) and photosystem I (PSI), cyclic electron flow around PSI, and state transitions. This is Cytochrome b6-f complex subunit 4 from Emiliania huxleyi (Coccolithophore).